We begin with the raw amino-acid sequence, 217 residues long: GTP cyclohydrolase 1 (217 aa).

Zn(2+)-binding residues include Cys109, His112, and Cys180.

It belongs to the GTP cyclohydrolase I family. In terms of assembly, toroid-shaped homodecamer, composed of two pentamers of five dimers.

The enzyme catalyses GTP + H2O = 7,8-dihydroneopterin 3'-triphosphate + formate + H(+). It functions in the pathway cofactor biosynthesis; 7,8-dihydroneopterin triphosphate biosynthesis; 7,8-dihydroneopterin triphosphate from GTP: step 1/1. In Aliivibrio fischeri (strain ATCC 700601 / ES114) (Vibrio fischeri), this protein is GTP cyclohydrolase 1.